A 318-amino-acid chain; its full sequence is MVFFPHRHLIGIKGLTEQDITYLLDKADEAVKISRQREKKTSTLRGLTQINLFFEASTRTQASFELAGKRLGADVMNMSVGNSSVKKGETLIDTAMTLNAMRPDVLVIRHSSAGAAALLAQKVSCSVVNAGDGQHEHPTQALLDALTIRRAKGKLSRIIVAICGDVLHSRVARSNILLLNAMGARVRVVAPATLLPAGIADMGVEVFHSMKEGLKDADVVMMLRLQRERMSGAFVPSVREYYHFYGLDAETLKAAKEDALVMHPGPMNRGVEIASEVADGPQSVIAEQVEMGVAVRMAVMETLLVSQNQGPRTEGAGA.

Carbamoyl phosphate is bound by residues arginine 59 and threonine 60. Lysine 87 is a binding site for L-aspartate. 3 residues coordinate carbamoyl phosphate: arginine 109, histidine 137, and glutamine 140. Positions 170 and 224 each coordinate L-aspartate. Residues glycine 265 and proline 266 each contribute to the carbamoyl phosphate site.

This sequence belongs to the aspartate/ornithine carbamoyltransferase superfamily. ATCase family. Heterododecamer (2C3:3R2) of six catalytic PyrB chains organized as two trimers (C3), and six regulatory PyrI chains organized as three dimers (R2).

It catalyses the reaction carbamoyl phosphate + L-aspartate = N-carbamoyl-L-aspartate + phosphate + H(+). Its pathway is pyrimidine metabolism; UMP biosynthesis via de novo pathway; (S)-dihydroorotate from bicarbonate: step 2/3. Functionally, catalyzes the condensation of carbamoyl phosphate and aspartate to form carbamoyl aspartate and inorganic phosphate, the committed step in the de novo pyrimidine nucleotide biosynthesis pathway. The protein is Aspartate carbamoyltransferase catalytic subunit of Rhizobium rhizogenes (strain K84 / ATCC BAA-868) (Agrobacterium radiobacter).